Consider the following 247-residue polypeptide: MAAKRVEAKDYKKAAATLVDAFFDDPVCVYLCHTTNEQQFKKLMTEMFEYIVYAHIIRGLVLEVGDFAGISLWMGPGNNMDDWYSILRSGLWRLKYKLDGEGRKRFFNEFLPILNDTKADVLKERDDHSWYLVYVGVSSKEQGKGYLRKLIEPIFNICDQEGLPIYLESSHLHNRPIYEHFGFVYQQSIYLTRDNQKVPLEIMIREPETESKAEQSAKPKAALSKTVSASIAEKVEGSLAVSSTPVC.

Positions 70–205 (ISLWMGPGNN…QKVPLEIMIR (136 aa)) constitute an N-acetyltransferase domain.

The protein belongs to the acetyltransferase family.

Its subcellular location is the endoplasmic reticulum. It localises to the golgi apparatus. The protein localises to the vacuole. This is an uncharacterized protein from Schizosaccharomyces pombe (strain 972 / ATCC 24843) (Fission yeast).